The primary structure comprises 360 residues: Peptide chain release factor 1 (360 aa).

Position 235 is an N5-methylglutamine (Gln235). Positions 285 to 313 (KRQQAEASTRRNLLGSGDRSDRNRTYNFP) are disordered.

It belongs to the prokaryotic/mitochondrial release factor family. Post-translationally, methylated by PrmC. Methylation increases the termination efficiency of RF1.

It localises to the cytoplasm. Functionally, peptide chain release factor 1 directs the termination of translation in response to the peptide chain termination codons UAG and UAA. The protein is Peptide chain release factor 1 of Salmonella paratyphi A (strain ATCC 9150 / SARB42).